Here is a 107-residue protein sequence, read N- to C-terminus: Prokineticin-2 (107 aa).

A signal peptide spans 1–26; the sequence is MEDPRCAPLLLLLLLPLLLTPPAGDA. Disulfide bonds link cysteine 33–cysteine 45, cysteine 39–cysteine 57, cysteine 44–cysteine 85, cysteine 67–cysteine 93, and cysteine 87–cysteine 103.

Belongs to the AVIT (prokineticin) family. As to expression, expressed at high levels in testis and at lower levels in brain, lung, ovary, spleen, thymus and uterus.

It localises to the secreted. Functionally, may function as an output molecule from the suprachiasmatic nucleus (SCN) that transmits behavioral circadian rhythm. May also function locally within the SCN to synchronize output. Potently contracts gastrointestinal (GI) smooth muscle. The sequence is that of Prokineticin-2 (Prok2) from Rattus norvegicus (Rat).